Reading from the N-terminus, the 80-residue chain is Translation initiation factor IF-1 (80 aa).

The 75-residue stretch at 6-80 (EKKKKDESDS…TSRGRIVYRR (75 aa)) folds into the S1-like domain.

It belongs to the IF-1 family. Component of the 30S ribosomal translation pre-initiation complex which assembles on the 30S ribosome in the order IF-2 and IF-3, IF-1 and N-formylmethionyl-tRNA(fMet); mRNA recruitment can occur at any time during PIC assembly.

The protein localises to the cytoplasm. Functionally, one of the essential components for the initiation of protein synthesis. Stabilizes the binding of IF-2 and IF-3 on the 30S subunit to which N-formylmethionyl-tRNA(fMet) subsequently binds. Helps modulate mRNA selection, yielding the 30S pre-initiation complex (PIC). Upon addition of the 50S ribosomal subunit IF-1, IF-2 and IF-3 are released leaving the mature 70S translation initiation complex. The protein is Translation initiation factor IF-1 of Deinococcus radiodurans (strain ATCC 13939 / DSM 20539 / JCM 16871 / CCUG 27074 / LMG 4051 / NBRC 15346 / NCIMB 9279 / VKM B-1422 / R1).